Consider the following 154-residue polypeptide: 3-hydroxyacyl-[acyl-carrier-protein] dehydratase FabZ (154 aa).

His-60 is an active-site residue.

It belongs to the thioester dehydratase family. FabZ subfamily.

The protein resides in the cytoplasm. It carries out the reaction a (3R)-hydroxyacyl-[ACP] = a (2E)-enoyl-[ACP] + H2O. Functionally, involved in unsaturated fatty acids biosynthesis. Catalyzes the dehydration of short chain beta-hydroxyacyl-ACPs and long chain saturated and unsaturated beta-hydroxyacyl-ACPs. This is 3-hydroxyacyl-[acyl-carrier-protein] dehydratase FabZ from Haemophilus ducreyi (strain 35000HP / ATCC 700724).